The chain runs to 30 residues: Photosystem I reaction center subunit XII (30 aa).

The helical transmembrane segment at 6–26 (VFTILAIALVPAVMALLLGSA) threads the bilayer.

This sequence belongs to the PsaM family.

The protein localises to the cellular thylakoid membrane. This Synechococcus sp. (strain JA-2-3B'a(2-13)) (Cyanobacteria bacterium Yellowstone B-Prime) protein is Photosystem I reaction center subunit XII.